Here is a 364-residue protein sequence, read N- to C-terminus: Cobalt-precorrin-5B C(1)-methyltransferase (364 aa).

This sequence belongs to the CbiD family.

It carries out the reaction Co-precorrin-5B + S-adenosyl-L-methionine = Co-precorrin-6A + S-adenosyl-L-homocysteine. The protein operates within cofactor biosynthesis; adenosylcobalamin biosynthesis; cob(II)yrinate a,c-diamide from sirohydrochlorin (anaerobic route): step 6/10. Functionally, catalyzes the methylation of C-1 in cobalt-precorrin-5B to form cobalt-precorrin-6A. The polypeptide is Cobalt-precorrin-5B C(1)-methyltransferase (Pseudomonas putida (strain ATCC 47054 / DSM 6125 / CFBP 8728 / NCIMB 11950 / KT2440)).